Consider the following 316-residue polypeptide: MQGENFTIWSIFFLEGFSQYPGLEVVLFVFSLVMYLTTLLGNSTLILITILDSRLKTPMYLFLGNLSFMDICYTSASVPTLLVNLLSSQKTIIFSGCAVQMYLSLAMGSTECVLLAVMAYDRYVAICNPLRYSIIMNRCVCARMATVSWVTGCLTALLETSFALQIPLCGNLIDHFTCEILAVLKLACTSSLLMNTIMLVVSILLLPIPMLLVCISYIFILSTILRITSAEGRNKAFSTCGAHLTVVILYYGAALSMYLKPSSSNAQKIDKIISLLYGVLTPMLNPIIYSLRNKEVKDAMKKLLGKITLHQTHEHL.

Topologically, residues 1-20 (MQGENFTIWSIFFLEGFSQY) are extracellular. An N-linked (GlcNAc...) asparagine glycan is attached at asparagine 5. A helical membrane pass occupies residues 21–41 (PGLEVVLFVFSLVMYLTTLLG). At 42–65 (NSTLILITILDSRLKTPMYLFLGN) the chain is on the cytoplasmic side. Residues 66 to 86 (LSFMDICYTSASVPTLLVNLL) traverse the membrane as a helical segment. At 87–97 (SSQKTIIFSGC) the chain is on the extracellular side. A disulfide bridge links cysteine 97 with cysteine 188. A helical transmembrane segment spans residues 98–118 (AVQMYLSLAMGSTECVLLAVM). Topologically, residues 119-143 (AYDRYVAICNPLRYSIIMNRCVCAR) are cytoplasmic. The helical transmembrane segment at 144–164 (MATVSWVTGCLTALLETSFAL) threads the bilayer. The Extracellular segment spans residues 165-199 (QIPLCGNLIDHFTCEILAVLKLACTSSLLMNTIML). The helical transmembrane segment at 200-220 (VVSILLLPIPMLLVCISYIFI) threads the bilayer. The Cytoplasmic segment spans residues 221–238 (LSTILRITSAEGRNKAFS). A helical membrane pass occupies residues 239-259 (TCGAHLTVVILYYGAALSMYL). The Extracellular segment spans residues 260–270 (KPSSSNAQKID). A helical membrane pass occupies residues 271-291 (KIISLLYGVLTPMLNPIIYSL). Topologically, residues 292 to 316 (RNKEVKDAMKKLLGKITLHQTHEHL) are cytoplasmic.

It belongs to the G-protein coupled receptor 1 family.

Its subcellular location is the cell membrane. In terms of biological role, odorant receptor. This Homo sapiens (Human) protein is Olfactory receptor 2K2 (OR2K2).